The following is a 178-amino-acid chain: Small ribosomal subunit protein uS5 (178 aa).

In terms of domain architecture, S5 DRBM spans 17-80 (FEERIVEIRR…AAARASVVEI (64 aa)).

This sequence belongs to the universal ribosomal protein uS5 family. Part of the 30S ribosomal subunit. Contacts proteins S4 and S8.

Its function is as follows. With S4 and S12 plays an important role in translational accuracy. Located at the back of the 30S subunit body where it stabilizes the conformation of the head with respect to the body. In Pseudothermotoga lettingae (strain ATCC BAA-301 / DSM 14385 / NBRC 107922 / TMO) (Thermotoga lettingae), this protein is Small ribosomal subunit protein uS5.